A 152-amino-acid polypeptide reads, in one-letter code: Regulatory protein RecX (152 aa).

The protein belongs to the RecX family.

The protein localises to the cytoplasm. In terms of biological role, modulates RecA activity. This Haemophilus influenzae (strain PittEE) protein is Regulatory protein RecX.